Here is an 845-residue protein sequence, read N- to C-terminus: Molybdenum cofactor sulfurase (845 aa).

K240 carries the N6-(pyridoxal phosphate)lysine modification. C404 is a catalytic residue. Residues 666–840 (SFPQDSSPSS…LMVGDTVTPS (175 aa)) form the MOSC domain.

The protein belongs to the class-V pyridoxal-phosphate-dependent aminotransferase family. MOCOS subfamily. It depends on pyridoxal 5'-phosphate as a cofactor.

It carries out the reaction Mo-molybdopterin + L-cysteine + AH2 = thio-Mo-molybdopterin + L-alanine + A + H2O. Its pathway is cofactor biosynthesis; molybdopterin biosynthesis. Functionally, sulfurates the molybdenum cofactor. Sulfation of molybdenum is essential for xanthine dehydrogenase (XDH) and aldehyde oxidase (ADO) enzymes in which molybdenum cofactor is liganded by 1 oxygen and 1 sulfur atom in active form. This chain is Molybdenum cofactor sulfurase, found in Aspergillus clavatus (strain ATCC 1007 / CBS 513.65 / DSM 816 / NCTC 3887 / NRRL 1 / QM 1276 / 107).